The chain runs to 426 residues: Proline--tRNA ligase (426 aa).

The protein belongs to the class-II aminoacyl-tRNA synthetase family. ProS type 2 subfamily. Homodimer.

The protein resides in the cytoplasm. It carries out the reaction tRNA(Pro) + L-proline + ATP = L-prolyl-tRNA(Pro) + AMP + diphosphate. Catalyzes the attachment of proline to tRNA(Pro) in a two-step reaction: proline is first activated by ATP to form Pro-AMP and then transferred to the acceptor end of tRNA(Pro). This is Proline--tRNA ligase from Rickettsia rickettsii (strain Iowa).